An 86-amino-acid polypeptide reads, in one-letter code: MGLFDFLKAKKTTAETAKNRLQIIIAQERSNRGGPDYLPLLQRELLEVIKKYVNIDVDAVKVDLVKDGQHDVLDISVALPEGPDKP.

It belongs to the MinE family.

Functionally, prevents the cell division inhibition by proteins MinC and MinD at internal division sites while permitting inhibition at polar sites. This ensures cell division at the proper site by restricting the formation of a division septum at the midpoint of the long axis of the cell. The chain is Cell division topological specificity factor from Stenotrophomonas maltophilia (strain R551-3).